Here is a 243-residue protein sequence, read N- to C-terminus: tRNA (guanine-N(1)-)-methyltransferase (243 aa).

S-adenosyl-L-methionine is bound by residues glycine 111 and 131–136; that span reads IGDYVL.

It belongs to the RNA methyltransferase TrmD family. Homodimer.

It localises to the cytoplasm. It catalyses the reaction guanosine(37) in tRNA + S-adenosyl-L-methionine = N(1)-methylguanosine(37) in tRNA + S-adenosyl-L-homocysteine + H(+). Its function is as follows. Specifically methylates guanosine-37 in various tRNAs. The polypeptide is tRNA (guanine-N(1)-)-methyltransferase (Brevibacillus brevis (strain 47 / JCM 6285 / NBRC 100599)).